The following is a 185-amino-acid chain: Threonylcarbamoyl-AMP synthase (185 aa).

In terms of domain architecture, YrdC-like spans 4–185; the sequence is SFRVQQAARE…LATGEVVRPG (182 aa).

The protein belongs to the SUA5 family. TsaC subfamily.

The protein localises to the cytoplasm. The enzyme catalyses L-threonine + hydrogencarbonate + ATP = L-threonylcarbamoyladenylate + diphosphate + H2O. Functionally, required for the formation of a threonylcarbamoyl group on adenosine at position 37 (t(6)A37) in tRNAs that read codons beginning with adenine. Catalyzes the conversion of L-threonine, HCO(3)(-)/CO(2) and ATP to give threonylcarbamoyl-AMP (TC-AMP) as the acyladenylate intermediate, with the release of diphosphate. This Pseudomonas putida (strain ATCC 700007 / DSM 6899 / JCM 31910 / BCRC 17059 / LMG 24140 / F1) protein is Threonylcarbamoyl-AMP synthase.